The following is a 234-amino-acid chain: GTP cyclohydrolase 1 type 2 homolog (234 aa).

5 residues coordinate a divalent metal cation: His-61, His-62, Asp-80, His-195, and Glu-199.

The protein belongs to the GTP cyclohydrolase I type 2/NIF3 family. As to quaternary structure, homohexamer.

This chain is GTP cyclohydrolase 1 type 2 homolog, found in Methanothermobacter thermautotrophicus (strain ATCC 29096 / DSM 1053 / JCM 10044 / NBRC 100330 / Delta H) (Methanobacterium thermoautotrophicum).